Here is a 376-residue protein sequence, read N- to C-terminus: Immunoglobulin G-binding protein H (376 aa).

The first 41 residues, M1–A41, serve as a signal peptide directing secretion. The tract at residues T69 to H271 is disordered. Basic and acidic residues-rich tracts occupy residues E72–Q146, E156–I203, L211–I245, and L253–H271. C repeat units lie at residues Q153–H187, Q195–H229, and Q237–H271. D repeat units lie at residues Q272–E277, A278–E283, A286–E291, and A293–G298. The segment at L292 to T348 is disordered. The short motif at L342–G346 is the LPXTG sorting signal element. Pentaglycyl murein peptidoglycan amidated threonine is present on T345. A propeptide spans G346 to N376 (removed by sortase).

It belongs to the M protein family.

The protein resides in the secreted. It is found in the cell wall. The polypeptide is Immunoglobulin G-binding protein H (Streptococcus pyogenes serotype M1).